The primary structure comprises 692 residues: Elongation factor G (692 aa).

Residues 8-282 (ERTRNIGIMA…AIVYYLPSPV (275 aa)) enclose the tr-type G domain. GTP-binding positions include 17–24 (AHIDAGKT), 81–85 (DTPGH), and 135–138 (NKMD).

This sequence belongs to the TRAFAC class translation factor GTPase superfamily. Classic translation factor GTPase family. EF-G/EF-2 subfamily.

It localises to the cytoplasm. Catalyzes the GTP-dependent ribosomal translocation step during translation elongation. During this step, the ribosome changes from the pre-translocational (PRE) to the post-translocational (POST) state as the newly formed A-site-bound peptidyl-tRNA and P-site-bound deacylated tRNA move to the P and E sites, respectively. Catalyzes the coordinated movement of the two tRNA molecules, the mRNA and conformational changes in the ribosome. This Carboxydothermus hydrogenoformans (strain ATCC BAA-161 / DSM 6008 / Z-2901) protein is Elongation factor G.